We begin with the raw amino-acid sequence, 155 residues long: 2-C-methyl-D-erythritol 2,4-cyclodiphosphate synthase (155 aa).

A divalent metal cation contacts are provided by aspartate 9 and histidine 11. 4-CDP-2-C-methyl-D-erythritol 2-phosphate-binding positions include 9–11 (DSH) and 35–36 (HS). Residue histidine 43 participates in a divalent metal cation binding. A 4-CDP-2-C-methyl-D-erythritol 2-phosphate-binding site is contributed by 57 to 59 (DIG).

It belongs to the IspF family. As to quaternary structure, homotrimer. The cofactor is a divalent metal cation.

It carries out the reaction 4-CDP-2-C-methyl-D-erythritol 2-phosphate = 2-C-methyl-D-erythritol 2,4-cyclic diphosphate + CMP. It functions in the pathway isoprenoid biosynthesis; isopentenyl diphosphate biosynthesis via DXP pathway; isopentenyl diphosphate from 1-deoxy-D-xylulose 5-phosphate: step 4/6. Its function is as follows. Involved in the biosynthesis of isopentenyl diphosphate (IPP) and dimethylallyl diphosphate (DMAPP), two major building blocks of isoprenoid compounds. Catalyzes the conversion of 4-diphosphocytidyl-2-C-methyl-D-erythritol 2-phosphate (CDP-ME2P) to 2-C-methyl-D-erythritol 2,4-cyclodiphosphate (ME-CPP) with a corresponding release of cytidine 5-monophosphate (CMP). This chain is 2-C-methyl-D-erythritol 2,4-cyclodiphosphate synthase, found in Koribacter versatilis (strain Ellin345).